The following is a 311-amino-acid chain: tRNA(Ile)-lysidine synthase (311 aa).

Position 32–37 (32–37 (SGGPDS)) interacts with ATP.

This sequence belongs to the tRNA(Ile)-lysidine synthase family.

The protein resides in the cytoplasm. It carries out the reaction cytidine(34) in tRNA(Ile2) + L-lysine + ATP = lysidine(34) in tRNA(Ile2) + AMP + diphosphate + H(+). Functionally, ligates lysine onto the cytidine present at position 34 of the AUA codon-specific tRNA(Ile) that contains the anticodon CAU, in an ATP-dependent manner. Cytidine is converted to lysidine, thus changing the amino acid specificity of the tRNA from methionine to isoleucine. This Cutibacterium acnes (strain DSM 16379 / KPA171202) (Propionibacterium acnes) protein is tRNA(Ile)-lysidine synthase.